The following is a 190-amino-acid chain: Small ribosomal subunit protein eS7B (190 aa).

Ser2 is subject to N-acetylserine. A phosphoserine mark is found at Ser10 and Ser31. Residues Lys83 and Lys84 each participate in a glycyl lysine isopeptide (Lys-Gly) (interchain with G-Cter in ubiquitin) cross-link.

The protein belongs to the eukaryotic ribosomal protein eS7 family. Component of the small ribosomal subunit (SSU). Mature yeast ribosomes consist of a small (40S) and a large (60S) subunit. The 40S small subunit contains 1 molecule of ribosomal RNA (18S rRNA) and 33 different proteins (encoded by 57 genes). The large 60S subunit contains 3 rRNA molecules (25S, 5.8S and 5S rRNA) and 46 different proteins (encoded by 81 genes). Interacts with snoRNA U3. uS11 interacts with MPP10. Component of the ribosomal small subunit (SSU) processome composed of at least 40 protein subunits and snoRNA U3. In terms of processing, N-terminally acetylated by acetyltransferase NatA. Post-translationally, ubiquitinated at Lys-83 and Lys-84 in response to stalled ribosomes, leading to activation of the No-Go Decay (NGD) pathway: first monoubiquitinated by MOT2/NOT4, followed by formation by HEL2 of 'Lys-63'-linked polyubiquitin chains on monoubiquitin.

The protein resides in the cytoplasm. The protein localises to the nucleus. Its subcellular location is the nucleolus. Functionally, component of the ribosome, a large ribonucleoprotein complex responsible for the synthesis of proteins in the cell. The small ribosomal subunit (SSU) binds messenger RNAs (mRNAs) and translates the encoded message by selecting cognate aminoacyl-transfer RNA (tRNA) molecules. The large subunit (LSU) contains the ribosomal catalytic site termed the peptidyl transferase center (PTC), which catalyzes the formation of peptide bonds, thereby polymerizing the amino acids delivered by tRNAs into a polypeptide chain. The nascent polypeptides leave the ribosome through a tunnel in the LSU and interact with protein factors that function in enzymatic processing, targeting, and the membrane insertion of nascent chains at the exit of the ribosomal tunnel. eS7 is involved in nucleolar processing of pre-18S ribosomal RNA and ribosome assembly. In Saccharomyces cerevisiae (strain ATCC 204508 / S288c) (Baker's yeast), this protein is Small ribosomal subunit protein eS7B.